Consider the following 405-residue polypeptide: Diaminopimelate decarboxylase (405 aa).

An N6-(pyridoxal phosphate)lysine modification is found at Lys46. Pyridoxal 5'-phosphate contacts are provided by residues Gly225 and 259 to 262 (EPGR). 3 residues coordinate substrate: Arg262, Arg298, and Tyr302. The active-site Proton donor is Cys329. Substrate contacts are provided by Glu330 and Tyr358. Tyr358 serves as a coordination point for pyridoxal 5'-phosphate.

The protein belongs to the Orn/Lys/Arg decarboxylase class-II family. LysA subfamily. Homodimer. Requires pyridoxal 5'-phosphate as cofactor.

The catalysed reaction is meso-2,6-diaminopimelate + H(+) = L-lysine + CO2. It functions in the pathway amino-acid biosynthesis; L-lysine biosynthesis via DAP pathway; L-lysine from DL-2,6-diaminopimelate: step 1/1. Specifically catalyzes the decarboxylation of meso-diaminopimelate (meso-DAP) to L-lysine. This Helicobacter pylori (strain ATCC 700392 / 26695) (Campylobacter pylori) protein is Diaminopimelate decarboxylase.